The primary structure comprises 351 residues: Heat shock factor protein HSF30 (351 aa).

Residues 29-123 (PPPFLSKTYE…LLKTIKRRRN (95 aa)) mediate DNA binding.

It belongs to the HSF family. As to quaternary structure, homotrimer. Exhibits temperature-dependent phosphorylation.

The protein resides in the nucleus. DNA-binding protein that specifically binds heat shock promoter elements (HSE) and activates transcription. The protein is Heat shock factor protein HSF30 (HSF30) of Solanum peruvianum (Peruvian tomato).